We begin with the raw amino-acid sequence, 296 residues long: Glycine--tRNA ligase alpha subunit (296 aa).

This sequence belongs to the class-II aminoacyl-tRNA synthetase family. As to quaternary structure, tetramer of two alpha and two beta subunits.

It is found in the cytoplasm. The catalysed reaction is tRNA(Gly) + glycine + ATP = glycyl-tRNA(Gly) + AMP + diphosphate. The polypeptide is Glycine--tRNA ligase alpha subunit (Parasynechococcus marenigrum (strain WH8102)).